A 242-amino-acid chain; its full sequence is Probable 2-phosphosulfolactate phosphatase (242 aa).

Belongs to the ComB family. It depends on Mg(2+) as a cofactor.

The enzyme catalyses (2R)-O-phospho-3-sulfolactate + H2O = (2R)-3-sulfolactate + phosphate. In Prochlorococcus marinus (strain NATL2A), this protein is Probable 2-phosphosulfolactate phosphatase.